Here is a 302-residue protein sequence, read N- to C-terminus: Polyamine aminopropyltransferase (302 aa).

Positions 4-239 (WTWHLEWQTP…GLWGFIYASD (236 aa)) constitute a PABS domain. Glutamine 33 contacts S-methyl-5'-thioadenosine. 2 residues coordinate spermidine: histidine 64 and glutamate 88. S-methyl-5'-thioadenosine-binding positions include aspartate 108 and 140 to 141 (DG). The active-site Proton acceptor is the aspartate 158. Proline 167 is a binding site for S-methyl-5'-thioadenosine.

The protein belongs to the spermidine/spermine synthase family. Homodimer or homotetramer.

The protein localises to the cytoplasm. It catalyses the reaction S-adenosyl 3-(methylsulfanyl)propylamine + putrescine = S-methyl-5'-thioadenosine + spermidine + H(+). The protein operates within amine and polyamine biosynthesis; spermidine biosynthesis; spermidine from putrescine: step 1/1. Its function is as follows. Catalyzes the irreversible transfer of a propylamine group from the amino donor S-adenosylmethioninamine (decarboxy-AdoMet) to putrescine (1,4-diaminobutane) to yield spermidine. The sequence is that of Polyamine aminopropyltransferase from Sulfolobus acidocaldarius (strain ATCC 33909 / DSM 639 / JCM 8929 / NBRC 15157 / NCIMB 11770).